The primary structure comprises 288 residues: Chemotaxis protein methyltransferase 2 (288 aa).

The CheR-type methyltransferase domain maps to 1 to 280 (MNEIVITDTD…TGYYKPHKGK (280 aa)). S-adenosyl-L-methionine is bound by residues Asn-76, Thr-78, Arg-82, Glu-119, Asp-145, 200–201 (NL), and 219–220 (RN).

It carries out the reaction L-glutamyl-[protein] + S-adenosyl-L-methionine = [protein]-L-glutamate 5-O-methyl ester + S-adenosyl-L-homocysteine. Functionally, methylation of the membrane-bound methyl-accepting chemotaxis proteins (MCP) to form gamma-glutamyl methyl ester residues in MCP. This is Chemotaxis protein methyltransferase 2 (cheR2) from Vibrio cholerae serotype O1 (strain ATCC 39315 / El Tor Inaba N16961).